The primary structure comprises 95 residues: Sec-independent protein translocase protein TatA (95 aa).

A helical transmembrane segment spans residues 1-21 (MGSMSVWHWVIVAVVVMLLFG). The interval 42-95 (GMADDETQPNTATSVPPVGPNDPVRTLPHQGAPGTAPQPPHVQPHVSAGDHKAV) is disordered.

It belongs to the TatA/E family. The Tat system comprises two distinct complexes: a TatABC complex, containing multiple copies of TatA, TatB and TatC subunits, and a separate TatA complex, containing only TatA subunits. Substrates initially bind to the TatABC complex, which probably triggers association of the separate TatA complex to form the active translocon.

The protein resides in the cell inner membrane. Functionally, part of the twin-arginine translocation (Tat) system that transports large folded proteins containing a characteristic twin-arginine motif in their signal peptide across membranes. TatA could form the protein-conducting channel of the Tat system. This Methylorubrum extorquens (strain CM4 / NCIMB 13688) (Methylobacterium extorquens) protein is Sec-independent protein translocase protein TatA.